The following is a 407-amino-acid chain: Aspartate aminotransferase, cytoplasmic (407 aa).

G39, W136, and N189 together coordinate L-aspartate. Residue K253 is modified to N6-(pyridoxal phosphate)lysine. Residue R381 coordinates L-aspartate.

It belongs to the class-I pyridoxal-phosphate-dependent aminotransferase family. In terms of assembly, homodimer. Requires pyridoxal 5'-phosphate as cofactor.

The protein localises to the cytoplasm. The catalysed reaction is L-aspartate + 2-oxoglutarate = oxaloacetate + L-glutamate. Functionally, important for the metabolism of amino acids and Krebs-cycle related organic acids. In plants, it is involved in nitrogen metabolism and in aspects of carbon and energy metabolism. The sequence is that of Aspartate aminotransferase, cytoplasmic from Oryza sativa subsp. japonica (Rice).